The following is a 187-amino-acid chain: UPF0301 protein PBPRA3139 (187 aa).

The protein belongs to the UPF0301 (AlgH) family.

The polypeptide is UPF0301 protein PBPRA3139 (Photobacterium profundum (strain SS9)).